We begin with the raw amino-acid sequence, 133 residues long: Salivary cystatin-L (133 aa).

The N-terminal stretch at 1 to 19 (MTSSFALVLLLGGVAVCVA) is a signal peptide. Residues 30–117 (ANHQANPEFL…HRTCTTVVFE (88 aa)) enclose the Cystatin domain. 2 cysteine pairs are disulfide-bonded: Cys-89/Cys-100 and Cys-111/Cys-130.

It belongs to the cystatin family. Monomer. Can form homodimers in vitro, but probably not in vivo. Homodimers are predicted to be inactive; dimerization disrupts the interaction with target proteases.

It localises to the secreted. Inhibitor of cysteine proteinases. Inhibits host immune responses via its inhibition of host cathepsins. Contributes to the suppression of the host's immune response to tick salivary proteins and is important for successful feeding on hosts. Inhibits differentiation of host dendritic cells. Inhibits proliferation of host T-cells in response to antigen stimulus. Down-regulates TLR2-mediated host responses to infection by B.burgdorferi and the production of the chemokine CCL3 by host dendritic cells. Down-regulates host responses to infection by B.burgdorferi and the production of IFNB1 by host dendritic cells. Down-regulates IL1B production by host mast cells, and this then leads to impaired activation of IL1R1, resulting in decreased IL9 production. Inhibits host inflammatory reactions and recruitment of host neutrophils. Inhibits papain and cathepsin L (CTSL) (in vitro). Inhibits cathepsin S (CTSS) (in vitro). Inhibits CTSV and CTSC, but to a lesser degree (in vitro). This is Salivary cystatin-L from Ixodes scapularis (Black-legged tick).